Here is a 164-residue protein sequence, read N- to C-terminus: Transcription elongation factor GreA (164 aa).

Belongs to the GreA/GreB family.

Functionally, necessary for efficient RNA polymerase transcription elongation past template-encoded arresting sites. The arresting sites in DNA have the property of trapping a certain fraction of elongating RNA polymerases that pass through, resulting in locked ternary complexes. Cleavage of the nascent transcript by cleavage factors such as GreA or GreB allows the resumption of elongation from the new 3'terminus. GreA releases sequences of 2 to 3 nucleotides. This Helicobacter acinonychis (strain Sheeba) protein is Transcription elongation factor GreA.